The sequence spans 273 residues: Probable ribosomal RNA small subunit methyltransferase A (273 aa).

S-adenosyl-L-methionine-binding residues include Asn-23, Leu-25, Gly-50, Glu-71, Asp-95, and Asn-110.

This sequence belongs to the class I-like SAM-binding methyltransferase superfamily. rRNA adenine N(6)-methyltransferase family. RsmA subfamily.

It is found in the cytoplasm. Specifically dimethylates two adjacent adenosines in the loop of a conserved hairpin near the 3'-end of 16S rRNA in the 30S particle. May play a critical role in biogenesis of 30S subunits. The protein is Probable ribosomal RNA small subunit methyltransferase A of Pyrococcus furiosus (strain ATCC 43587 / DSM 3638 / JCM 8422 / Vc1).